The following is a 209-amino-acid chain: MINYLRGQAIEVIKTPNNRLILILDVNQIGYEIQIPSRLALDIGNNNNDSCQIFTHLLLREEQPLLYGFGTAPERELFRQLLSVNGVGAQLALALIDTLGIEELVVAIVTGNTKILSKTPGVGLKTAERIALELKTKLAAWRQLREATTTITAILPAAAILEDVQMTLLALGYSQEEIDRAMAVLSQDALFSKNTQPEDWIKGAINWLG.

The tract at residues 1 to 70 is domain I; that stretch reads MINYLRGQAI…EEQPLLYGFG (70 aa). The interval 71-149 is domain II; that stretch reads TAPERELFRQ…AWRQLREATT (79 aa). The tract at residues 150–158 is flexible linker; the sequence is TITAILPAA. The interval 158–209 is domain III; that stretch reads AAILEDVQMTLLALGYSQEEIDRAMAVLSQDALFSKNTQPEDWIKGAINWLG.

It belongs to the RuvA family. In terms of assembly, homotetramer. Forms an RuvA(8)-RuvB(12)-Holliday junction (HJ) complex. HJ DNA is sandwiched between 2 RuvA tetramers; dsDNA enters through RuvA and exits via RuvB. An RuvB hexamer assembles on each DNA strand where it exits the tetramer. Each RuvB hexamer is contacted by two RuvA subunits (via domain III) on 2 adjacent RuvB subunits; this complex drives branch migration. In the full resolvosome a probable DNA-RuvA(4)-RuvB(12)-RuvC(2) complex forms which resolves the HJ.

The protein localises to the cytoplasm. In terms of biological role, the RuvA-RuvB-RuvC complex processes Holliday junction (HJ) DNA during genetic recombination and DNA repair, while the RuvA-RuvB complex plays an important role in the rescue of blocked DNA replication forks via replication fork reversal (RFR). RuvA specifically binds to HJ cruciform DNA, conferring on it an open structure. The RuvB hexamer acts as an ATP-dependent pump, pulling dsDNA into and through the RuvAB complex. HJ branch migration allows RuvC to scan DNA until it finds its consensus sequence, where it cleaves and resolves the cruciform DNA. The sequence is that of Holliday junction branch migration complex subunit RuvA from Microcystis aeruginosa (strain NIES-843 / IAM M-2473).